We begin with the raw amino-acid sequence, 622 residues long: uncharacterized protein (622 aa).

Residues cysteine 302, cysteine 306, cysteine 310, and cysteine 521 each contribute to the [4Fe-4S] cluster site.

This sequence belongs to the AOR/FOR family. [4Fe-4S] cluster is required as a cofactor.

This is an uncharacterized protein from Methanocaldococcus jannaschii (strain ATCC 43067 / DSM 2661 / JAL-1 / JCM 10045 / NBRC 100440) (Methanococcus jannaschii).